We begin with the raw amino-acid sequence, 393 residues long: NAD(P)H-quinone oxidoreductase subunit H, chloroplastic (393 aa).

The protein belongs to the complex I 49 kDa subunit family. In terms of assembly, NDH is composed of at least 16 different subunits, 5 of which are encoded in the nucleus.

It localises to the plastid. It is found in the chloroplast thylakoid membrane. The catalysed reaction is a plastoquinone + NADH + (n+1) H(+)(in) = a plastoquinol + NAD(+) + n H(+)(out). It catalyses the reaction a plastoquinone + NADPH + (n+1) H(+)(in) = a plastoquinol + NADP(+) + n H(+)(out). Its function is as follows. NDH shuttles electrons from NAD(P)H:plastoquinone, via FMN and iron-sulfur (Fe-S) centers, to quinones in the photosynthetic chain and possibly in a chloroplast respiratory chain. The immediate electron acceptor for the enzyme in this species is believed to be plastoquinone. Couples the redox reaction to proton translocation, and thus conserves the redox energy in a proton gradient. This is NAD(P)H-quinone oxidoreductase subunit H, chloroplastic from Pelargonium hortorum (Common geranium).